The following is a 181-amino-acid chain: CDP-diacylglycerol--glycerol-3-phosphate 3-phosphatidyltransferase (181 aa).

Helical transmembrane passes span 8 to 28 (PNYL…AFYI), 35 to 55 (KLGA…GYIA), 64 to 84 (FGKM…IIML), and 148 to 168 (IIYL…LTII).

Belongs to the CDP-alcohol phosphatidyltransferase class-I family.

The protein resides in the cell membrane. It carries out the reaction a CDP-1,2-diacyl-sn-glycerol + sn-glycerol 3-phosphate = a 1,2-diacyl-sn-glycero-3-phospho-(1'-sn-glycero-3'-phosphate) + CMP + H(+). Its pathway is phospholipid metabolism; phosphatidylglycerol biosynthesis; phosphatidylglycerol from CDP-diacylglycerol: step 1/2. Its function is as follows. This protein catalyzes the committed step to the synthesis of the acidic phospholipids. In Rickettsia felis (strain ATCC VR-1525 / URRWXCal2) (Rickettsia azadi), this protein is CDP-diacylglycerol--glycerol-3-phosphate 3-phosphatidyltransferase (pgsA).